The primary structure comprises 447 residues: Glutamate--tRNA ligase 1 (447 aa).

The 'HIGH' region motif lies at 10–20 (PSPTGMLHVGN). The short motif at 240–244 (KISKR) is the 'KMSKS' region element. Lys-243 is an ATP binding site.

It belongs to the class-I aminoacyl-tRNA synthetase family. Glutamate--tRNA ligase type 1 subfamily. In terms of assembly, monomer.

It localises to the cytoplasm. The catalysed reaction is tRNA(Glu) + L-glutamate + ATP = L-glutamyl-tRNA(Glu) + AMP + diphosphate. Catalyzes the attachment of glutamate to tRNA(Glu) in a two-step reaction: glutamate is first activated by ATP to form Glu-AMP and then transferred to the acceptor end of tRNA(Glu). In Rickettsia massiliae (strain Mtu5), this protein is Glutamate--tRNA ligase 1.